The sequence spans 137 residues: Large ribosomal subunit protein uL16 (137 aa).

This sequence belongs to the universal ribosomal protein uL16 family. In terms of assembly, part of the 50S ribosomal subunit.

Binds 23S rRNA and is also seen to make contacts with the A and possibly P site tRNAs. The sequence is that of Large ribosomal subunit protein uL16 from Lawsonia intracellularis (strain PHE/MN1-00).